The following is a 205-amino-acid chain: Adenylyl-sulfate kinase (205 aa).

Residue 31–38 (GLSGAGKS) coordinates ATP. The Phosphoserine intermediate role is filled by serine 105.

This sequence belongs to the APS kinase family.

It carries out the reaction adenosine 5'-phosphosulfate + ATP = 3'-phosphoadenylyl sulfate + ADP + H(+). The protein operates within sulfur metabolism; hydrogen sulfide biosynthesis; sulfite from sulfate: step 2/3. Its function is as follows. Catalyzes the synthesis of activated sulfate. The polypeptide is Adenylyl-sulfate kinase (Shewanella sp. (strain MR-4)).